Here is a 253-residue protein sequence, read N- to C-terminus: uncharacterized protein (253 aa).

The protein belongs to the A.longa ORF167/ORF288 family.

It localises to the plastid. This is an uncharacterized protein from Euglena longa (Euglenophycean alga).